The following is a 214-amino-acid chain: MRFFIDTANVEEIKKANRMGFIAGVTTNPSLVAKEGRDFNEVIQEITSIVDGPISGEVVSLEADEMIAEGRVIAKIHPNMVVKIPMTGEGLAAVKVLTEEGIKTNVTLVFSATQALLAARAGATYVSPFLGRLDDIGDDGLVLIRDIADIFEIYGIPTEIISASVRHPIHVIECAKAGADIATVPFKVFEQMLKHPLTDSGIDKFLADWEAAKK.

Lys-83 serves as the catalytic Schiff-base intermediate with substrate.

This sequence belongs to the transaldolase family. Type 3B subfamily.

It localises to the cytoplasm. It carries out the reaction D-sedoheptulose 7-phosphate + D-glyceraldehyde 3-phosphate = D-erythrose 4-phosphate + beta-D-fructose 6-phosphate. Its pathway is carbohydrate degradation; pentose phosphate pathway; D-glyceraldehyde 3-phosphate and beta-D-fructose 6-phosphate from D-ribose 5-phosphate and D-xylulose 5-phosphate (non-oxidative stage): step 2/3. Functionally, transaldolase is important for the balance of metabolites in the pentose-phosphate pathway. The sequence is that of Probable transaldolase 1 from Listeria monocytogenes serotype 4b (strain F2365).